A 427-amino-acid polypeptide reads, in one-letter code: UPF0229 protein YeaH (427 aa).

A compositionally biased stretch (basic and acidic residues) spans 79–90 (NDHFVQNDRIER). Residues 79-110 (NDHFVQNDRIERPQGGGGGSGSGQGQASQDGE) form a disordered region. Positions 92–102 (QGGGGGSGSGQ) are enriched in gly residues.

It belongs to the UPF0229 family.

This chain is UPF0229 protein YeaH, found in Escherichia coli O139:H28 (strain E24377A / ETEC).